The primary structure comprises 267 residues: Small ribosomal subunit protein uS2 (267 aa).

Residues 234-267 (DNAEEELAEAISQEEPSAAEELPDDMADNENEFE) form a disordered region. Positions 250-267 (SAAEELPDDMADNENEFE) are enriched in acidic residues.

It belongs to the universal ribosomal protein uS2 family.

The protein is Small ribosomal subunit protein uS2 of Dichelobacter nodosus (strain VCS1703A).